The chain runs to 83 residues: RNA-binding protein Hfq (83 aa).

A Sm domain is found at 10–69 (DPFLNALRREHVPVSIYLVNGIKLQGQIESFDQYVVLLRNTVTQMVYKHAISTIVPGRAV).

The protein belongs to the Hfq family. Homohexamer.

Functionally, RNA chaperone that binds small regulatory RNA (sRNAs) and mRNAs to facilitate mRNA translational regulation in response to envelope stress, environmental stress and changes in metabolite concentrations. Also binds with high specificity to tRNAs. This is RNA-binding protein Hfq from Acidovorax ebreus (strain TPSY) (Diaphorobacter sp. (strain TPSY)).